The chain runs to 346 residues: 2,5-dichlorohydroquinone reductive dechlorinase (346 aa).

Residues 43–154 (PRFELFHFVF…YLCDALSGGT (112 aa)) form the GST N-terminal domain. The GST C-terminal domain occupies 189–335 (DRRPESMQAV…AIIQWPGHPP (147 aa)).

It belongs to the GST superfamily.

The enzyme catalyses 2,5-dichlorohydroquinone + 2 glutathione = chlorohydroquinone + glutathione disulfide + chloride + H(+). The catalysed reaction is chlorohydroquinone + 2 glutathione = hydroquinone + glutathione disulfide + chloride + H(+). The protein operates within xenobiotic degradation; gamma-hexachlorocyclohexane degradation. In terms of biological role, catalyzes the degradation of 2,5-dichlorohydroquinone (2,5-DCHQ) into hydroquinone (HQ) via chlorohydroquinone (CHQ). Is involved in the degradation pathway that allows S.japonicum UT26 to grow on gamma-hexachlorocyclohexane (gamma-HCH or lindane) as the sole source of carbon and energy. However, the conversion of CHQ to HQ by LinD seems not to be essential for this degradation pathway, because the conversion rate of CHQ to HQ is much lower than that of 2,5-DCHQ to CHQ. CHQ is more efficiently degraded by LinE in strain UT26. This is 2,5-dichlorohydroquinone reductive dechlorinase from Sphingobium indicum (strain DSM 16413 / CCM 7287 / MTCC 6362 / UT26 / NBRC 101211 / UT26S) (Sphingobium japonicum).